Here is a 306-residue protein sequence, read N- to C-terminus: Fe-S cluster assembly protein dre2 (306 aa).

The interval 21–150 (NVTQKRSLLL…EKPQYQEAAV (130 aa)) is N-terminal SAM-like domain. The segment at 151–196 (PLRFGANKRKNKISPEPVKIESVGFVDNYDDDELINEDDLLDEEDL) is linker. Positions 206, 218, 221, and 223 each coordinate [2Fe-2S] cluster. Positions 206-223 (CQPETAKKRRRACKDCTC) are fe-S binding site A. [4Fe-4S] cluster contacts are provided by Cys-269, Cys-272, Cys-280, and Cys-283. Short sequence motifs (cx2C motif) lie at residues 269–272 (CNSC) and 280–283 (CASC). Positions 269-283 (CNSCSLGDAFRCASC) are fe-S binding site B.

It belongs to the anamorsin family. As to quaternary structure, monomer. Interacts with tah18. Interacts with mia40. The cofactor is [2Fe-2S] cluster. [4Fe-4S] cluster is required as a cofactor.

It is found in the cytoplasm. The protein resides in the mitochondrion intermembrane space. In terms of biological role, component of the cytosolic iron-sulfur (Fe-S) protein assembly (CIA) machinery required for the maturation of extramitochondrial Fe-S proteins. Part of an electron transfer chain functioning in an early step of cytosolic Fe-S biogenesis, facilitating the de novo assembly of a [4Fe-4S] cluster on the scaffold complex cfd1-nbp35. Electrons are transferred to dre2 from NADPH via the FAD- and FMN-containing protein tah18. Tah18-dre2 are also required for the assembly of the diferric tyrosyl radical cofactor of ribonucleotide reductase (RNR), probably by providing electrons for reduction during radical cofactor maturation in the catalytic small subunit rnr2. The protein is Fe-S cluster assembly protein dre2 of Talaromyces stipitatus (strain ATCC 10500 / CBS 375.48 / QM 6759 / NRRL 1006) (Penicillium stipitatum).